A 158-amino-acid polypeptide reads, in one-letter code: Transcription elongation factor GreA (158 aa).

The stretch at 47–68 forms a coiled coil; that stretch reads AEYDAAKEAQGLLEMRIAKLEE.

Belongs to the GreA/GreB family.

Functionally, necessary for efficient RNA polymerase transcription elongation past template-encoded arresting sites. The arresting sites in DNA have the property of trapping a certain fraction of elongating RNA polymerases that pass through, resulting in locked ternary complexes. Cleavage of the nascent transcript by cleavage factors such as GreA or GreB allows the resumption of elongation from the new 3'terminus. GreA releases sequences of 2 to 3 nucleotides. The protein is Transcription elongation factor GreA of Flavobacterium johnsoniae (strain ATCC 17061 / DSM 2064 / JCM 8514 / BCRC 14874 / CCUG 350202 / NBRC 14942 / NCIMB 11054 / UW101) (Cytophaga johnsonae).